Consider the following 251-residue polypeptide: Flap endonuclease Xni (251 aa).

D104 is a Mg(2+) binding site. Residues 160–249 (VLPQQLPDYW…IDGNLQQLRL (90 aa)) form the 5'-3' exonuclease domain. Positions 171, 172, 180, 182, and 185 each coordinate K(+). Residues 184-189 (GIGPKS) are interaction with DNA.

It belongs to the Xni family. The cofactor is Mg(2+). Requires K(+) as cofactor.

In terms of biological role, has flap endonuclease activity. During DNA replication, flap endonucleases cleave the 5'-overhanging flap structure that is generated by displacement synthesis when DNA polymerase encounters the 5'-end of a downstream Okazaki fragment. In Citrobacter koseri (strain ATCC BAA-895 / CDC 4225-83 / SGSC4696), this protein is Flap endonuclease Xni.